The primary structure comprises 201 residues: Putative 3-methyladenine DNA glycosylase (201 aa).

This sequence belongs to the DNA glycosylase MPG family.

This chain is Putative 3-methyladenine DNA glycosylase, found in Nitrosococcus oceani (strain ATCC 19707 / BCRC 17464 / JCM 30415 / NCIMB 11848 / C-107).